The primary structure comprises 222 residues: Riboflavin kinase (222 aa).

The interval 1-92 (MVLAEDLECL…CRLFAHEGGH (92 aa)) is H-T-H motif-like. The interval 93–222 (YTLPGIVISG…DRVNVEVAYD (130 aa)) is riboflavin kinase. 102–107 (GLGEGR) serves as a coordination point for CDP. Thr131 and Asn133 together coordinate Mg(2+). FMN contacts are provided by Ser188 and Glu196. 201–204 (VGLR) serves as a coordination point for CDP.

It belongs to the archaeal riboflavin kinase family. The cofactor is Mg(2+).

The catalysed reaction is riboflavin + CTP = CDP + FMN + H(+). Its pathway is cofactor biosynthesis; FMN biosynthesis; FMN from riboflavin (CTP route): step 1/1. Its function is as follows. Catalyzes the CTP-dependent phosphorylation of riboflavin (vitamin B2) to form flavin mononucleotide (FMN). This Methanoregula boonei (strain DSM 21154 / JCM 14090 / 6A8) protein is Riboflavin kinase (ribK).